Here is a 397-residue protein sequence, read N- to C-terminus: S-adenosylmethionine synthase (397 aa).

H15 contacts ATP. Residue D17 participates in Mg(2+) binding. E43 is a binding site for K(+). E56 and Q99 together coordinate L-methionine. The interval 99–109 (QSPDIAMGVNK) is flexible loop. Residues 175–177 (DGK), 241–242 (RF), D250, 256–257 (RK), A273, and K277 contribute to the ATP site. D250 lines the L-methionine pocket. L-methionine is bound at residue K281.

This sequence belongs to the AdoMet synthase family. As to quaternary structure, homotetramer; dimer of dimers. It depends on Mg(2+) as a cofactor. Requires K(+) as cofactor.

It localises to the cytoplasm. It carries out the reaction L-methionine + ATP + H2O = S-adenosyl-L-methionine + phosphate + diphosphate. Its pathway is amino-acid biosynthesis; S-adenosyl-L-methionine biosynthesis; S-adenosyl-L-methionine from L-methionine: step 1/1. Its function is as follows. Catalyzes the formation of S-adenosylmethionine (AdoMet) from methionine and ATP. The overall synthetic reaction is composed of two sequential steps, AdoMet formation and the subsequent tripolyphosphate hydrolysis which occurs prior to release of AdoMet from the enzyme. This Acetivibrio thermocellus (strain ATCC 27405 / DSM 1237 / JCM 9322 / NBRC 103400 / NCIMB 10682 / NRRL B-4536 / VPI 7372) (Clostridium thermocellum) protein is S-adenosylmethionine synthase.